The primary structure comprises 355 residues: Probable butyrate kinase (355 aa).

Belongs to the acetokinase family.

It localises to the cytoplasm. The catalysed reaction is butanoate + ATP = butanoyl phosphate + ADP. The chain is Probable butyrate kinase from Listeria innocua serovar 6a (strain ATCC BAA-680 / CLIP 11262).